The primary structure comprises 86 residues: Protein Tat (86 aa).

The segment at 1 to 24 (MEPVDPRLEPWKHPGSQPKTACTN) is interaction with human CREBBP. The tract at residues 1 to 48 (MEPVDPRLEPWKHPGSQPKTACTNCYCKKCCFHCQVCFITKALGISYG) is transactivation. The Zn(2+) site is built by C22, C25, and C27. Residues 22–37 (CTNCYCKKCCFHCQVC) are cysteine-rich. The residue at position 28 (K28) is an N6-acetyllysine; by host PCAF. Zn(2+) contacts are provided by C30, H33, C34, and C37. Residues 38 to 48 (FITKALGISYG) are core. Positions 48-59 (GRKKRRQRRRAH) are enriched in basic residues. The interval 48-86 (GRKKRRQRRRAHQNSQTHQASLSKQPTSQPRGDPTGPKE) is disordered. The short motif at 49–57 (RKKRRQRRR) is the Nuclear localization signal, RNA-binding (TAR), and protein transduction element. An interaction with the host capping enzyme RNGTT region spans residues 49–86 (RKKRRQRRRAHQNSQTHQASLSKQPTSQPRGDPTGPKE). K50 and K51 each carry N6-acetyllysine; by host EP300 and GCN5L2. Asymmetric dimethylarginine; by host PRMT6 is present on residues R52 and R53. Positions 60 to 77 (QNSQTHQASLSKQPTSQP) are enriched in polar residues. A Glycyl lysine isopeptide (Lys-Gly) (interchain with G-Cter in ubiquitin) cross-link involves residue K71. The Cell attachment site motif lies at 78-80 (RGD).

This sequence belongs to the lentiviruses Tat family. Interacts with host CCNT1. Associates with the P-TEFb complex composed at least of Tat, P-TEFb (CDK9 and CCNT1), TAR RNA, RNA Pol II. Recruits the HATs CREBBP, TAF1/TFIID, EP300, PCAF and GCN5L2. Interacts with host KAT5/Tip60; this interaction targets the latter to degradation. Interacts with the host deacetylase SIRT1. Interacts with host capping enzyme RNGTT; this interaction stimulates RNGTT. Binds to host KDR, and to the host integrins ITGAV/ITGB3 and ITGA5/ITGB1. Interacts with host KPNB1/importin beta-1 without previous binding to KPNA1/importin alpha-1. Interacts with EIF2AK2. Interacts with host nucleosome assembly protein NAP1L1; this interaction may be required for the transport of Tat within the nucleus, since the two proteins interact at the nuclear rim. Interacts with host C1QBP/SF2P32; this interaction involves lysine-acetylated Tat. Interacts with the host chemokine receptors CCR2, CCR3 and CXCR4. Interacts with host DPP4/CD26; this interaction may trigger an anti-proliferative effect. Interacts with host LDLR. Interacts with the host extracellular matrix metalloproteinase MMP1. Interacts with host PRMT6; this interaction mediates Tat's methylation. Interacts with, and is ubiquitinated by MDM2/Hdm2. Interacts with host PSMC3 and HTATIP2. Interacts with STAB1; this interaction may overcome SATB1-mediated repression of IL2 and IL2RA (interleukin) in T cells by binding to the same domain than HDAC1. Interacts (when acetylated) with human CDK13, thereby increasing HIV-1 mRNA splicing and promoting the production of the doubly spliced HIV-1 protein Nef. Interacts with host TBP; this interaction modulates the activity of transcriptional pre-initiation complex. Interacts with host RELA. Interacts with host PLSCR1; this interaction negatively regulates Tat transactivation activity by altering its subcellular distribution. Post-translationally, asymmetrical arginine methylation by host PRMT6 seems to diminish the transactivation capacity of Tat and affects the interaction with host CCNT1. Acetylation by EP300, CREBBP, GCN5L2/GCN5 and PCAF regulates the transactivation activity of Tat. EP300-mediated acetylation of Lys-50 promotes dissociation of Tat from the TAR RNA through the competitive binding to PCAF's bromodomain. In addition, the non-acetylated Tat's N-terminus can also interact with PCAF. PCAF-mediated acetylation of Lys-28 enhances Tat's binding to CCNT1. Lys-50 is deacetylated by SIRT1. In terms of processing, polyubiquitination by host MDM2 does not target Tat to degradation, but activates its transactivation function and fosters interaction with CCNT1 and TAR RNA. Post-translationally, phosphorylated by EIF2AK2 on serine and threonine residues adjacent to the basic region important for TAR RNA binding and function. Phosphorylation of Tat by EIF2AK2 is dependent on the prior activation of EIF2AK2 by dsRNA.

The protein resides in the host nucleus. Its subcellular location is the host nucleolus. It is found in the host cytoplasm. It localises to the secreted. Its function is as follows. Transcriptional activator that increases RNA Pol II processivity, thereby increasing the level of full-length viral transcripts. Recognizes a hairpin structure at the 5'-LTR of the nascent viral mRNAs referred to as the transactivation responsive RNA element (TAR) and recruits the cyclin T1-CDK9 complex (P-TEFb complex) that will in turn hyperphosphorylate the RNA polymerase II to allow efficient elongation. The CDK9 component of P-TEFb and other Tat-activated kinases hyperphosphorylate the C-terminus of RNA Pol II that becomes stabilized and much more processive. Other factors such as HTATSF1/Tat-SF1, SUPT5H/SPT5, and HTATIP2 are also important for Tat's function. Besides its effect on RNA Pol II processivity, Tat induces chromatin remodeling of proviral genes by recruiting the histone acetyltransferases (HATs) CREBBP, EP300 and PCAF to the chromatin. This also contributes to the increase in proviral transcription rate, especially when the provirus integrates in transcriptionally silent region of the host genome. To ensure maximal activation of the LTR, Tat mediates nuclear translocation of NF-kappa-B by interacting with host RELA. Through its interaction with host TBP, Tat may also modulate transcription initiation. Tat can reactivate a latently infected cell by penetrating in it and transactivating its LTR promoter. In the cytoplasm, Tat is thought to act as a translational activator of HIV-1 mRNAs. Extracellular circulating Tat can be endocytosed by surrounding uninfected cells via the binding to several surface receptors such as CD26, CXCR4, heparan sulfate proteoglycans (HSPG) or LDLR. Neurons are rarely infected, but they internalize Tat via their LDLR. Through its interaction with nuclear HATs, Tat is potentially able to control the acetylation-dependent cellular gene expression. Modulates the expression of many cellular genes involved in cell survival, proliferation or in coding for cytokines or cytokine receptors. Tat plays a role in T-cell and neurons apoptosis. Tat induced neurotoxicity and apoptosis probably contribute to neuroAIDS. Circulating Tat also acts as a chemokine-like and/or growth factor-like molecule that binds to specific receptors on the surface of the cells, affecting many cellular pathways. In the vascular system, Tat binds to ITGAV/ITGB3 and ITGA5/ITGB1 integrins dimers at the surface of endothelial cells and competes with bFGF for heparin-binding sites, leading to an excess of soluble bFGF. This chain is Protein Tat, found in Homo sapiens (Human).